Reading from the N-terminus, the 242-residue chain is Small ribosomal subunit protein uS5 (242 aa).

Residues 1–14 (MADENSTGPGNQPE) are compositionally biased toward polar residues. Residues 1-65 (MADENSTGPG…DRRPRDEDGG (65 aa)) form a disordered region. Residues 41 to 65 (DGGRGGRDGGRGRRDDRRPRDEDGG) are compositionally biased toward basic and acidic residues. Positions 68 to 131 (LIEKLVHINR…AAAKKAMIRV (64 aa)) constitute an S5 DRBM domain. The disordered stretch occupies residues 204–242 (EQTSPKSVAQRRGKKVSDLIKRGGASDRAAEAEAAAVTE). The segment covering 218–234 (KVSDLIKRGGASDRAAE) has biased composition (basic and acidic residues).

It belongs to the universal ribosomal protein uS5 family. In terms of assembly, part of the 30S ribosomal subunit. Contacts proteins S4 and S8.

With S4 and S12 plays an important role in translational accuracy. Functionally, located at the back of the 30S subunit body where it stabilizes the conformation of the head with respect to the body. The sequence is that of Small ribosomal subunit protein uS5 from Sphingopyxis alaskensis (strain DSM 13593 / LMG 18877 / RB2256) (Sphingomonas alaskensis).